The sequence spans 569 residues: uncharacterized protein (569 aa).

A signal peptide spans Met1–Ala21. Residues Lys22–Lys530 lie on the Extracellular side of the membrane. A helical membrane pass occupies residues Ala531–Phe551. Residues Tyr552–Gly569 are Cytoplasmic-facing.

It is found in the cell membrane. This is an uncharacterized protein from Bacillus subtilis (strain 168).